Consider the following 334-residue polypeptide: Tryptophan--tRNA ligase (334 aa).

Residues 11–13 (QPS) and 19–20 (GN) each bind ATP. The 'HIGH' region signature appears at 12-20 (PSGELTIGN). Residue Asp-135 participates in L-tryptophan binding. ATP contacts are provided by residues 147-149 (GDD), Ile-186, and 195-199 (KMSKS). Positions 195–199 (KMSKS) match the 'KMSKS' region motif.

The protein belongs to the class-I aminoacyl-tRNA synthetase family. Homodimer.

It localises to the cytoplasm. It carries out the reaction tRNA(Trp) + L-tryptophan + ATP = L-tryptophyl-tRNA(Trp) + AMP + diphosphate + H(+). In terms of biological role, catalyzes the attachment of tryptophan to tRNA(Trp). This Haemophilus influenzae (strain ATCC 51907 / DSM 11121 / KW20 / Rd) protein is Tryptophan--tRNA ligase.